We begin with the raw amino-acid sequence, 429 residues long: SVP1-like protein 2 (429 aa).

WD repeat units follow at residues 10 to 48, 50 to 96, 178 to 218, and 223 to 262; these read PVLAPVLSVTFNHDNSCFAVGLDHGFRIYESGSCVLRTS, DFGA…QVGV, AHTS…RLYE, and IDKAIIFSIGFSPSGKYLACTSDKSTLHVFDVTRPGGTRP. A disordered region spans residues 262–297; sequence PITSNGGTAYAAGEPSVTGNNRPSSPYSVASSSGGG.

It belongs to the WD repeat PROPPIN family.

It is found in the vacuole membrane. It localises to the cytoplasmic vesicle membrane. Functionally, involved in mitochondrial or peroxisomal functions and amino acid signaling pathways. The polypeptide is SVP1-like protein 2 (apg-14) (Neurospora crassa (strain ATCC 24698 / 74-OR23-1A / CBS 708.71 / DSM 1257 / FGSC 987)).